The sequence spans 428 residues: 3-phosphoshikimate 1-carboxyvinyltransferase (428 aa).

Positions 20, 21, and 25 each coordinate 3-phosphoshikimate. Residue Lys-20 coordinates phosphoenolpyruvate. The phosphoenolpyruvate site is built by Gly-93 and Arg-122. 3-phosphoshikimate-binding residues include Ser-167, Gln-169, Asp-317, and Lys-344. Gln-169 serves as a coordination point for phosphoenolpyruvate. Residue Asp-317 is the Proton acceptor of the active site. Arg-348 and Arg-390 together coordinate phosphoenolpyruvate.

The protein belongs to the EPSP synthase family. As to quaternary structure, monomer.

The protein resides in the cytoplasm. The catalysed reaction is 3-phosphoshikimate + phosphoenolpyruvate = 5-O-(1-carboxyvinyl)-3-phosphoshikimate + phosphate. It functions in the pathway metabolic intermediate biosynthesis; chorismate biosynthesis; chorismate from D-erythrose 4-phosphate and phosphoenolpyruvate: step 6/7. In terms of biological role, catalyzes the transfer of the enolpyruvyl moiety of phosphoenolpyruvate (PEP) to the 5-hydroxyl of shikimate-3-phosphate (S3P) to produce enolpyruvyl shikimate-3-phosphate and inorganic phosphate. The polypeptide is 3-phosphoshikimate 1-carboxyvinyltransferase (Leptospira biflexa serovar Patoc (strain Patoc 1 / ATCC 23582 / Paris)).